A 588-amino-acid chain; its full sequence is Aspartate--tRNA ligase (588 aa).

Residue Glu-177 coordinates L-aspartate. An aspartate region spans residues 201–204; that stretch reads QLFK. L-aspartate is bound at residue Arg-223. Residues 223 to 225 and Gln-232 each bind ATP; that span reads RDE. His-451 is a binding site for L-aspartate. ATP is bound at residue Glu-485. Arg-492 lines the L-aspartate pocket. 537 to 540 contacts ATP; the sequence is GLDR.

This sequence belongs to the class-II aminoacyl-tRNA synthetase family. Type 1 subfamily. In terms of assembly, homodimer.

The protein localises to the cytoplasm. The catalysed reaction is tRNA(Asp) + L-aspartate + ATP = L-aspartyl-tRNA(Asp) + AMP + diphosphate. In terms of biological role, catalyzes the attachment of L-aspartate to tRNA(Asp) in a two-step reaction: L-aspartate is first activated by ATP to form Asp-AMP and then transferred to the acceptor end of tRNA(Asp). The sequence is that of Aspartate--tRNA ligase from Staphylococcus carnosus (strain TM300).